Consider the following 258-residue polypeptide: Maintenance of carboxysome distribution protein A (258 aa).

ATP is bound by residues glycine 11, glycine 12, glutamine 13, glycine 14, lysine 15, threonine 16, threonine 17, glutamine 40, glutamate 147, lysine 151, phenylalanine 182, arginine 183, leucine 216, glutamate 217, serine 218, and tyrosine 221. Threonine 16 contacts Mg(2+).

It belongs to the ParA family. McdA subfamily. Homodimerizes in the presence of ATP, making extra nucleotide contacts than with ADP or AMP-PNP. Each subunit binds 1 ATP molecule; Glu-147, Lys-151 and Arg-183 cross the dimer interface to contact ATP in the other subunit, while Phe-182, Arg-183 and Tyr-221 stack with the adenine base in their own subunit. Forms a complex with McdB.

Its subcellular location is the cytoplasm. It is found in the nucleoid. It carries out the reaction ATP + H2O = ADP + phosphate + H(+). In terms of biological role, mcdA and McdB together mediate carboxysome (Cb) spacing, size, ultrastructure and probably inheritance in the cell, together they prevent Cb aggregation. McdA is an ATPase that forms dynamic gradients on the nucleoid in response to adapter protein McdB, which associates with carboxysomes. The interplay between McdA gradients on the nucleoid and McdB-bound carboxysomes result in the equal spacing of Cbs along the cell length. Binds DNA saturably and strongly in the presence of Mg(2+)ATP; without ATP, DNA-binding is very poor (tested with a mutant that should not be able to hydrolyze ATP, Asp-38-Ala). Decreasing the NaCl concentration increases DNA binding. Its function is as follows. Incorrect positioning (aggregation) of carboxysomes results in reduced CO(2) fixation by encapsulated ribulose-1,5-bisphosphate carboxylase (RuBisCO, cbbL/cbbS), which leads to slower growth. In Gloeothece citriformis (strain PCC 7424) (Cyanothece sp. (strain PCC 7424)), this protein is Maintenance of carboxysome distribution protein A.